The chain runs to 270 residues: 5-deoxy-glucuronate isomerase (270 aa).

The protein belongs to the isomerase IolB family.

The catalysed reaction is 5-deoxy-D-glucuronate = 5-dehydro-2-deoxy-D-gluconate. The protein operates within polyol metabolism; myo-inositol degradation into acetyl-CoA; acetyl-CoA from myo-inositol: step 4/7. Its function is as follows. Involved in the isomerization of 5-deoxy-glucuronate (5DG) to 5-dehydro-2-deoxy-D-gluconate (DKG or 2-deoxy-5-keto-D-gluconate). The sequence is that of 5-deoxy-glucuronate isomerase from Halalkalibacterium halodurans (strain ATCC BAA-125 / DSM 18197 / FERM 7344 / JCM 9153 / C-125) (Bacillus halodurans).